Here is an 800-residue protein sequence, read N- to C-terminus: Calmodulin-sensitive adenylate cyclase (800 aa).

The first 33 residues, 1 to 33 (MTRNKFIPNKFSIISFSVLLFAISSSQAIEVNA), serve as a signal peptide directing secretion. The region spanning 60 to 273 (KDSINNLVKT…MFEYMNKLEK (214 aa)) is the ATLF-like domain. Positions 294 to 349 (DVLKGEKALKASGLVPEHADAFKKIARELNTYILFRPVNKLATNLIKSGVATKGLN) are catalytic CA1. The interval 350–489 (VHGKSSDWGP…NVEGVLKPLT (140 aa)) is catalytic CB. Residue H351 is the Proton acceptor of the active site. The catalytic CA2 stretch occupies residues 490–622 (ADYDLFALAP…RFIEKNITGK (133 aa)). Mg(2+) is bound by residues D491 and D493. 3',5'-cyclic AMP-binding positions include T548 and 577–579 (HGT). Residue H577 coordinates Mg(2+). Residues 623–800 (DYLYYFNRSY…EVFQKIIDEK (178 aa)) form an interaction with calmodulin region.

Belongs to the adenylyl cyclase class-2 family. As to quaternary structure, interacts (via ATLF domain) with the cleaved form of protective antigen (PA-63) anthrax toxin; interaction is required for EF translocation into the host cytoplasm. The cofactor is Ca(2+).

It localises to the secreted. The protein resides in the host cytoplasm. Its subcellular location is the host cytosol. It carries out the reaction ATP = 3',5'-cyclic AMP + diphosphate. With respect to regulation, host calmodulin is an absolute requirement for its activation. Inhibited by ethyl 5-aminopyrazolo[1,5-a]quinazoline-3-carboxylate. Edema factor (EF), which constitutes one of the three proteins composing the anthrax toxin, causes edema in the host. Acts as a calmodulin-dependent adenylyl cyclase by converting ATP to cAMP, leading to dramatic elevation of intracellular cAMP levels in the host, thereby causing edema. EF is not toxic by itself and only acts as an edema factor when associated with protective antigen (PA) to form the edema toxin (EdTx). Required for the survival of germinated spores within macrophages at the early stages of infection. The chain is Calmodulin-sensitive adenylate cyclase (cya) from Bacillus anthracis.